We begin with the raw amino-acid sequence, 115 residues long: Large ribosomal subunit protein bL20 (115 aa).

The protein belongs to the bacterial ribosomal protein bL20 family.

Functionally, binds directly to 23S ribosomal RNA and is necessary for the in vitro assembly process of the 50S ribosomal subunit. It is not involved in the protein synthesizing functions of that subunit. This chain is Large ribosomal subunit protein bL20, found in Chlorobaculum tepidum (strain ATCC 49652 / DSM 12025 / NBRC 103806 / TLS) (Chlorobium tepidum).